The primary structure comprises 1048 residues: Probable beta-glucosidase E (1048 aa).

Residues 1 to 54 (MPPPPFRDAPSSAKSSQRYTPLHESIPEELNDKQYSSDADSLPLSDPSDGEDDS) form a disordered region. Residues 1-150 (MPPPPFRDAP…WRTVYYSKYW (150 aa)) are Cytoplasmic-facing. Positions 36–47 (SSDADSLPLSDP) are enriched in low complexity. The chain crosses the membrane as a helical; Signal-anchor for type II membrane protein span at residues 151–171 (WRALIGVVVVLVLLVLVFLGL). The Extracellular segment spans residues 172 to 1048 (ARSKQVGDEL…SRDLPLHGKY (877 aa)). N-linked (GlcNAc...) asparagine glycosylation is found at N216, N224, and N410. D438 is an active-site residue. N-linked (GlcNAc...) asparagine glycosylation is found at N481, N520, N578, N895, and N991. The tract at residues 508-527 (WERPPPDGEGGPNFSSWTDD) is disordered.

It belongs to the glycosyl hydrolase 3 family.

Its subcellular location is the cell membrane. It carries out the reaction Hydrolysis of terminal, non-reducing beta-D-glucosyl residues with release of beta-D-glucose.. It participates in glycan metabolism; cellulose degradation. Functionally, beta-glucosidases are one of a number of cellulolytic enzymes involved in the degradation of cellulosic biomass. Catalyzes the last step releasing glucose from the inhibitory cellobiose. This chain is Probable beta-glucosidase E (bglE), found in Aspergillus oryzae (strain ATCC 42149 / RIB 40) (Yellow koji mold).